We begin with the raw amino-acid sequence, 225 residues long: MLHIPSVLTSAQVIEIRQKLDAADWVDGKATVGAQGAQVKKNRQLPELSPVGMELGQIILKALVSNPLFFSAALPMRYMPPLFNRYEGGEHYGFHIDGSVRTIPGSNLSLRTDLSCTLFLCEPEDYDGGELIVSDTYGEHEVKLPAGDMILYPSSSLHKVEPVTRGARVCSFFWLQSMVADDGKRSLLFELDQNIQKLREKLGDCEEVVGLTGHYHNLLRQWAAV.

One can recognise a Fe2OG dioxygenase domain in the interval 77 to 177 (RYMPPLFNRY…RVCSFFWLQS (101 aa)). Fe cation-binding residues include histidine 95, aspartate 97, and histidine 158. A 2-oxoglutarate-binding site is contributed by arginine 168.

It depends on Fe(2+) as a cofactor. L-ascorbate serves as cofactor.

The protein is PKHD-type hydroxylase HEAR3399 of Herminiimonas arsenicoxydans.